The following is a 975-amino-acid chain: MSGIGNKRAAGEPGTSMPPEKKAAVEDSGTTVETIKLGGVSSTEELDIRTLQTKNRKLAEMLDQRQAIEDELREHIEKLERRQATDDASLLIVNRYWSQFDENIRIILKRYDLEQGLGDLLTERKALVVPEPEPDSDSNQERKDDRERGEGQEPAFSFLATLASSSSEEMESQLQERVESSRRAVSQIVTVYDKLQEKVELLSRKLNSGDNLIVEEAVQELNSFLAQENMRLQELTDLLQEKHRTMSQEFSKLQSKVETAESRVSVLESMIDDLQWDIDKIRKREQRLNRHLAEVLERVNSKGYKVYGAGSSLYGGTITINARKFEEMNAELEENKELAQNRLCELEKLRQDFEEVTTQNEKLKVELRSAVEQVVKETPEYRCMQSQFSVLYNESLQLKAHLDEARTLLHGTRGTHQHQVELIERDEVSLHKKLRTEVIQLEDTLAQVRKEYEMLRIEFEQTLAANEQAGPINREMRHLISSLQNHNHQLKGEVLRYKRKLREAQSDLNKTRLRSGSALLQSQSSTEDPKDEPAELKPDSEDLSSQSSASKASQEDANEIKSKRDEEERERERREKEREREREREKEKEREREKQKLKESEKERDSAKDKEKGKHDDGRKKEAEIIKQLKIELKKAQESQKEMKLLLDMYRSAPKEQRDKVQLMAAEKKSKAELEDLRQRLKDLEDKEKKENKKMADEDALRKIRAVEEQIEYLQKKLAMAKQEEEALLSEMDVTGQAFEDMQEQNIRLMQQLREKDDANFKLMSERIKSNQIHKLLKEEKEELADQVLTLKTQVDAQLQVVRKLEEKEHLLQSNIGTGEKELGLRTQALEMNKRKAMEAAQLADDLKAQLELAQKKLHDFQDEIVENSVTKEKDMFNFKRAQEDISRLRRKLETTKKPDNVPKCDEILMEEIKDYKARLTCPCCNMRKKDAVLTKCFHVFCFECVKTRYDTRQRKCPKCNAAFGANDFHRIYIG.

The disordered stretch occupies residues 1–30 (MSGIGNKRAAGEPGTSMPPEKKAAVEDSGT). The residue at position 21 (Lys21) is an N6-acetyllysine. A Phosphoserine modification is found at Ser41. Residues 43 to 90 (TEELDIRTLQTKNRKLAEMLDQRQAIEDELREHIEKLERRQATDDASL) are a coiled coil. The interval 125–155 (KALVVPEPEPDSDSNQERKDDRERGEGQEPA) is disordered. 2 positions are modified to phosphoserine: Ser136 and Ser138. The segment covering 139–151 (NQERKDDRERGEG) has biased composition (basic and acidic residues). Coiled-coil stretches lie at residues 168 to 375 (EEME…EQVV) and 429 to 898 (SLHK…TTKK). 2 positions are modified to N6-acetyllysine: Lys348 and Lys510. The disordered stretch occupies residues 507–622 (DLNKTRLRSG…GKHDDGRKKE (116 aa)). Ser522 is modified (phosphoserine). Residues 527–540 (EDPKDEPAELKPDS) are compositionally biased toward basic and acidic residues. Residues 543-552 (LSSQSSASKA) show a composition bias toward low complexity. Over residues 558–622 (NEIKSKRDEE…GKHDDGRKKE (65 aa)) the composition is skewed to basic and acidic residues. Ser562 is modified (phosphoserine). An RING-type zinc finger spans residues 922–961 (CPCCNMRKKDAVLTKCFHVFCFECVKTRYDTRQRKCPKCN).

Belongs to the BRE1 family. Component of the RNF20/40 complex (also known as BRE1 complex) probably composed of 2 copies of RNF20/BRE1A and 2 copies of RNF40/BRE1B. Interacts with UBE2E1/UBCH6. Interacts with p53/TP53 and WAC. Interacts with PAF1; the interaction mediates the association of the PAF1 and RNF20/40 complexes which is a prerequsite for recruitment of UBE2A/B. Interacts with isoform 1 and isoform 2 of PA2G4. Interacts with FBXL19. In terms of assembly, (Microbial infection) Interacts with human herpesvirus 8 (KSHV) protein RTA/ORF50; this interaction targets the SMC5-SMC6 complex for proteasomal degradation. In terms of tissue distribution, expressed in the normal brain and also in malignant gliomas (at protein level).

It is found in the nucleus. It catalyses the reaction S-ubiquitinyl-[E2 ubiquitin-conjugating enzyme]-L-cysteine + [acceptor protein]-L-lysine = [E2 ubiquitin-conjugating enzyme]-L-cysteine + N(6)-ubiquitinyl-[acceptor protein]-L-lysine.. Its pathway is protein modification; protein ubiquitination. Component of the RNF20/40 E3 ubiquitin-protein ligase complex that mediates monoubiquitination of 'Lys-120' of histone H2B (H2BK120ub1). H2BK120ub1 gives a specific tag for epigenetic transcriptional activation and is also prerequisite for histone H3 'Lys-4' and 'Lys-79' methylation (H3K4me and H3K79me, respectively). It thereby plays a central role inb histone code and gene regulation. The RNF20/40 complex forms a H2B ubiquitin ligase complex in cooperation with the E2 enzyme UBE2A or UBE2B; reports about the cooperation with UBE2E1/UBCH are contradictory. Required for transcriptional activation of Hox genes. Recruited to the MDM2 promoter, probably by being recruited by p53/TP53, and thereby acts as a transcriptional coactivator. Mediates the polyubiquitination of isoform 2 of PA2G4 in cancer cells leading to its proteasome-mediated degradation. Functionally, (Microbial infection) Promotes the human herpesvirus 8 (KSHV) lytic cycle by inducing the expression of lytic viral genes including the latency switch gene RTA/ORF50. The protein is E3 ubiquitin-protein ligase BRE1A (RNF20) of Homo sapiens (Human).